A 978-amino-acid chain; its full sequence is Alanine--tRNA ligase, chloroplastic/mitochondrial (978 aa).

The Zn(2+) site is built by histidine 655, histidine 659, cysteine 758, and histidine 762. Residue lysine 773 forms a Glycyl lysine isopeptide (Lys-Gly) (interchain with G-Cter in ubiquitin) linkage.

It belongs to the class-II aminoacyl-tRNA synthetase family. As to quaternary structure, monomer. The cofactor is Zn(2+).

The protein resides in the plastid. It is found in the chloroplast. The protein localises to the mitochondrion. It carries out the reaction tRNA(Ala) + L-alanine + ATP = L-alanyl-tRNA(Ala) + AMP + diphosphate. Its function is as follows. Catalyzes the attachment of alanine to tRNA(Ala) in a two-step reaction: alanine is first activated by ATP to form Ala-AMP and then transferred to the acceptor end of tRNA(Ala). Also edits incorrectly charged tRNA(Ala) via its editing domain. This Arabidopsis thaliana (Mouse-ear cress) protein is Alanine--tRNA ligase, chloroplastic/mitochondrial (EMB86).